Reading from the N-terminus, the 156-residue chain is Small ribosomal subunit protein uS7 (156 aa).

It belongs to the universal ribosomal protein uS7 family. Part of the 30S ribosomal subunit. Contacts proteins S9 and S11.

One of the primary rRNA binding proteins, it binds directly to 16S rRNA where it nucleates assembly of the head domain of the 30S subunit. Is located at the subunit interface close to the decoding center, probably blocks exit of the E-site tRNA. The polypeptide is Small ribosomal subunit protein uS7 (Geobacillus thermodenitrificans (strain NG80-2)).